Consider the following 154-residue polypeptide: Large ribosomal subunit protein bL9c (154 aa).

The protein belongs to the bacterial ribosomal protein bL9 family.

It is found in the plastid. The protein localises to the chloroplast. In terms of biological role, binds to the 23S rRNA. In Gracilaria tenuistipitata var. liui (Red alga), this protein is Large ribosomal subunit protein bL9c.